We begin with the raw amino-acid sequence, 520 residues long: Peptide chain release factor 3 (520 aa).

The tr-type G domain occupies 8–277 (ESRKTFAIIS…FAPMPNARQT (270 aa)). GTP contacts are provided by residues 17 to 24 (SHPDAGKT), 85 to 89 (DTPGH), and 139 to 142 (NKLD).

This sequence belongs to the TRAFAC class translation factor GTPase superfamily. Classic translation factor GTPase family. PrfC subfamily.

The protein resides in the cytoplasm. Its function is as follows. Increases the formation of ribosomal termination complexes and stimulates activities of RF-1 and RF-2. It binds guanine nucleotides and has strong preference for UGA stop codons. It may interact directly with the ribosome. The stimulation of RF-1 and RF-2 is significantly reduced by GTP and GDP, but not by GMP. This is Peptide chain release factor 3 from Staphylococcus aureus (strain MRSA252).